The sequence spans 166 residues: Phospholipase A2 inhibitor B1 (166 aa).

The signal sequence occupies residues 1–19; it reads MRLILLSGLLLLGTFLVNG. A C-type lectin domain is found at 46-161; that stretch reads LFHAFLTVHK…CDDNLLVVCE (116 aa). Cystine bridges form between C83-C160 and C138-C152. N122 is a glycosylation site (N-linked (GlcNAc...) asparagine).

This sequence belongs to the alpha-type phospholipase A2 inhibitor family. As to quaternary structure, homotrimer; non-covalently linked. As to expression, expressed by the liver.

It localises to the secreted. In terms of biological role, this phospholipase A2 inhibitor binds directly phospholipase A2 in the presence or absence of calcium. The polypeptide is Phospholipase A2 inhibitor B1 (Crotalus durissus terrificus (South American rattlesnake)).